The sequence spans 336 residues: Ornithine carbamoyltransferase, catabolic (336 aa).

Carbamoyl phosphate-binding positions include serine 57 to threonine 60, glutamine 84, arginine 108, and histidine 135 to glutamine 138. Residues asparagine 168, aspartate 232, and serine 236 to methionine 237 each bind L-ornithine. Carbamoyl phosphate contacts are provided by residues cysteine 274 to leucine 275 and arginine 321.

The protein belongs to the aspartate/ornithine carbamoyltransferase superfamily. OTCase family.

Its subcellular location is the cytoplasm. The enzyme catalyses carbamoyl phosphate + L-ornithine = L-citrulline + phosphate + H(+). The protein operates within amino-acid degradation; L-arginine degradation via ADI pathway; carbamoyl phosphate from L-arginine: step 2/2. In terms of biological role, reversibly catalyzes the transfer of the carbamoyl group from carbamoyl phosphate (CP) to the N(epsilon) atom of ornithine (ORN) to produce L-citrulline. The sequence is that of Ornithine carbamoyltransferase, catabolic (arcB) from Ectopseudomonas mendocina (Pseudomonas mendocina).